We begin with the raw amino-acid sequence, 152 residues long: MIDREQIVRIVSDYLSTGETFLVEVAIHPGNRILVELDSAQGVCIDECVALSRHIESQVDRDLEDYELEVGSTGLTSPLKVMRQWENCIDSELSVLLTNGMKETGRLITVAPEAIKLEVVRMVKPEGAKRKKPETQELTIVMADIKQAVRII.

Belongs to the RimP family.

It localises to the cytoplasm. Its function is as follows. Required for maturation of 30S ribosomal subunits. This is Ribosome maturation factor RimP from Porphyromonas gingivalis (strain ATCC 33277 / DSM 20709 / CIP 103683 / JCM 12257 / NCTC 11834 / 2561).